A 337-amino-acid polypeptide reads, in one-letter code: Monoacylglycerol lipase ABHD6 (337 aa).

At 1 to 8 (MDLDVVNM) the chain is on the extracellular side. A helical; Signal-anchor for type II membrane protein transmembrane segment spans residues 9–29 (FVIAGGTLAIPILAFVASFLL). Topologically, residues 30-337 (WPSALIRIYY…HNTDNNKKLD (308 aa)) are cytoplasmic. The 242-residue stretch at 72 to 313 (PSILMLHGFS…CGHSVVMERP (242 aa)) folds into the AB hydrolase-1 domain. F80 contributes to the (9Z)-octadecenoate binding site. S148 functions as the Nucleophile in the catalytic mechanism. M149 provides a ligand contact to (9Z)-octadecenoate. Catalysis depends on charge relay system residues D278 and H306. H306 provides a ligand contact to (9Z)-octadecenoate.

This sequence belongs to the AB hydrolase superfamily.

The protein resides in the late endosome membrane. It is found in the lysosome membrane. Its subcellular location is the mitochondrion membrane. It carries out the reaction Hydrolyzes glycerol monoesters of long-chain fatty acids.. The catalysed reaction is 1-octanoylglycerol + H2O = octanoate + glycerol + H(+). The enzyme catalyses 1-decanoylglycerol + H2O = decanoate + glycerol + H(+). It catalyses the reaction 1-dodecanoylglycerol + H2O = dodecanoate + glycerol + H(+). It carries out the reaction 1-tetradecanoylglycerol + H2O = tetradecanoate + glycerol + H(+). The catalysed reaction is 2-hexadecanoylglycerol + H2O = glycerol + hexadecanoate + H(+). The enzyme catalyses 2-(9Z-octadecenoyl)-glycerol + H2O = glycerol + (9Z)-octadecenoate + H(+). It catalyses the reaction 1-(9Z-octadecenoyl)-glycerol + H2O = glycerol + (9Z)-octadecenoate + H(+). It carries out the reaction 2-(9Z,12Z-octadecadienoyl)-glycerol + H2O = (9Z,12Z)-octadecadienoate + glycerol + H(+). The catalysed reaction is 2-(5Z,8Z,11Z,14Z-eicosatetraenoyl)-glycerol + H2O = glycerol + (5Z,8Z,11Z,14Z)-eicosatetraenoate + H(+). The enzyme catalyses 1-(5Z,8Z,11Z,14Z-eicosatetraenoyl)-glycerol + H2O = glycerol + (5Z,8Z,11Z,14Z)-eicosatetraenoate + H(+). It catalyses the reaction 1-(9Z,12Z-octadecadienoyl)-glycerol + H2O = (9Z,12Z)-octadecadienoate + glycerol + H(+). It carries out the reaction 3-(9Z-octadecenoyl)-sn-glycero-1-phospho-(3'-(9Z-octadecenoyl)-1'-sn-glycerol) + H2O = 3-(9Z-octadecenoyl)-sn-glycero-1-phospho-(1'-sn-glycerol) + (9Z)-octadecenoate + H(+). The catalysed reaction is (S,S)-2-(9Z-octadecenoyl)-sn-glycero-1-phospho-(2'-(9Z-octadecenoyl)-1'-sn-glycerol) + H2O = (S,S)-2-(9Z-octadecenoyl)-sn-glycero-1-phospho-(1'-sn-glycerol) + (9Z)-octadecenoate + H(+). The enzyme catalyses (R,R)-2-(9Z-octadecenoyl)-sn-glycero-3-phospho-(2'-(9Z-octadecenoyl)-3'-sn-glycerol) + H2O = (R,R)-2-(9Z-octadecenoyl)-sn-glycero-3-phospho-(3'-sn-glycerol) + (9Z)-octadecenoate + H(+). In terms of biological role, lipase that preferentially hydrolysis medium-chain saturated monoacylglycerols including 2-arachidonoylglycerol. Through 2-arachidonoylglycerol degradation may regulate endocannabinoid signaling pathways. Also has a lysophosphatidyl lipase activity with a preference for lysophosphatidylglycerol among other lysophospholipids. Also able to degrade bis(monoacylglycero)phosphate (BMP) and constitutes the major enzyme for BMP catabolism. BMP, also known as lysobisphosphatidic acid, is enriched in late endosomes and lysosomes and plays a key role in the formation of intraluminal vesicles and in lipid sorting. The protein is Monoacylglycerol lipase ABHD6 of Homo sapiens (Human).